Consider the following 151-residue polypeptide: Large ribosomal subunit protein uL13 (151 aa).

Residues 129 to 151 (PTHPHDAQKPKELNINTIPGAES) are disordered. Over residues 131–140 (HPHDAQKPKE) the composition is skewed to basic and acidic residues.

Belongs to the universal ribosomal protein uL13 family. As to quaternary structure, part of the 50S ribosomal subunit.

Functionally, this protein is one of the early assembly proteins of the 50S ribosomal subunit, although it is not seen to bind rRNA by itself. It is important during the early stages of 50S assembly. This is Large ribosomal subunit protein uL13 from Trichormus variabilis (strain ATCC 29413 / PCC 7937) (Anabaena variabilis).